The sequence spans 230 residues: Ribonuclease 3 (230 aa).

The 130-residue stretch at 5–134 folds into the RNase III domain; sequence EALLENSFNI…FLGALLLDKG (130 aa). Glu47 is a binding site for Mg(2+). Asp51 is an active-site residue. Asp120 and Glu123 together coordinate Mg(2+). Glu123 is an active-site residue. One can recognise a DRBM domain in the interval 160–229; sequence DYKTCLQELL…AKNALAQLSE (70 aa).

It belongs to the ribonuclease III family. Homodimer. Mg(2+) serves as cofactor.

It is found in the cytoplasm. The enzyme catalyses Endonucleolytic cleavage to 5'-phosphomonoester.. Functionally, digests double-stranded RNA. Involved in the processing of primary rRNA transcript to yield the immediate precursors to the large and small rRNAs (23S and 16S). Processes some mRNAs, and tRNAs when they are encoded in the rRNA operon. Processes pre-crRNA and tracrRNA of type II CRISPR loci if present in the organism. In Streptococcus equi subsp. zooepidemicus (strain H70), this protein is Ribonuclease 3.